A 78-amino-acid chain; its full sequence is UPF0349 protein Sca_0544 (78 aa).

The protein belongs to the UPF0349 family.

This is UPF0349 protein Sca_0544 from Staphylococcus carnosus (strain TM300).